The chain runs to 261 residues: Cytochrome c oxidase subunit 3 (261 aa).

Topologically, residues Met1 to Pro15 are mitochondrial matrix. Residues Trp16 to Trp34 form a helical membrane-spanning segment. At Phe35–Thr40 the chain is on the mitochondrial intermembrane side. Residues Thr41–Thr66 form a helical membrane-spanning segment. The Mitochondrial matrix portion of the chain corresponds to Phe67–Thr72. A helical membrane pass occupies residues Pro73–Ser105. Residues Leu106–Glu128 lie on the Mitochondrial intermembrane side of the membrane. A helical membrane pass occupies residues Val129–Met152. Residues Glu153 to Glu155 lie on the Mitochondrial matrix side of the membrane. A helical transmembrane segment spans residues Arg156–Glu183. Topologically, residues Ala184–Asp190 are mitochondrial intermembrane. The helical transmembrane segment at Gly191–Ile223 threads the bilayer. Topologically, residues Gln224–His232 are mitochondrial matrix. The helical transmembrane segment at Phe233–Ile256 threads the bilayer. Residues Tyr257–Ser261 lie on the Mitochondrial intermembrane side of the membrane.

Belongs to the cytochrome c oxidase subunit 3 family. As to quaternary structure, component of the cytochrome c oxidase (complex IV, CIV), a multisubunit enzyme composed of 14 subunits. The complex is composed of a catalytic core of 3 subunits MT-CO1, MT-CO2 and MT-CO3, encoded in the mitochondrial DNA, and 11 supernumerary subunits COX4I, COX5A, COX5B, COX6A, COX6B, COX6C, COX7A, COX7B, COX7C, COX8 and NDUFA4, which are encoded in the nuclear genome. The complex exists as a monomer or a dimer and forms supercomplexes (SCs) in the inner mitochondrial membrane with NADH-ubiquinone oxidoreductase (complex I, CI) and ubiquinol-cytochrome c oxidoreductase (cytochrome b-c1 complex, complex III, CIII), resulting in different assemblies (supercomplex SCI(1)III(2)IV(1) and megacomplex MCI(2)III(2)IV(2)).

The protein localises to the mitochondrion inner membrane. The enzyme catalyses 4 Fe(II)-[cytochrome c] + O2 + 8 H(+)(in) = 4 Fe(III)-[cytochrome c] + 2 H2O + 4 H(+)(out). Component of the cytochrome c oxidase, the last enzyme in the mitochondrial electron transport chain which drives oxidative phosphorylation. The respiratory chain contains 3 multisubunit complexes succinate dehydrogenase (complex II, CII), ubiquinol-cytochrome c oxidoreductase (cytochrome b-c1 complex, complex III, CIII) and cytochrome c oxidase (complex IV, CIV), that cooperate to transfer electrons derived from NADH and succinate to molecular oxygen, creating an electrochemical gradient over the inner membrane that drives transmembrane transport and the ATP synthase. Cytochrome c oxidase is the component of the respiratory chain that catalyzes the reduction of oxygen to water. Electrons originating from reduced cytochrome c in the intermembrane space (IMS) are transferred via the dinuclear copper A center (CU(A)) of subunit 2 and heme A of subunit 1 to the active site in subunit 1, a binuclear center (BNC) formed by heme A3 and copper B (CU(B)). The BNC reduces molecular oxygen to 2 water molecules using 4 electrons from cytochrome c in the IMS and 4 protons from the mitochondrial matrix. The chain is Cytochrome c oxidase subunit 3 (mt-co3) from Carassius auratus (Goldfish).